We begin with the raw amino-acid sequence, 265 residues long: tRNA pseudouridine synthase A (265 aa).

D52 serves as the catalytic Nucleophile. Y105 lines the substrate pocket.

The protein belongs to the tRNA pseudouridine synthase TruA family.

The enzyme catalyses uridine(38/39/40) in tRNA = pseudouridine(38/39/40) in tRNA. Its function is as follows. Formation of pseudouridine at positions 38, 39 and 40 in the anticodon stem and loop of transfer RNAs. The polypeptide is tRNA pseudouridine synthase A (Archaeoglobus fulgidus (strain ATCC 49558 / DSM 4304 / JCM 9628 / NBRC 100126 / VC-16)).